The primary structure comprises 250 residues: UDP-2,3-diacylglucosamine hydrolase (250 aa).

Positions 8, 10, 41, 79, and 114 each coordinate Mn(2+). 79-80 is a binding site for substrate; that stretch reads NR. Substrate is bound by residues D122, S160, Q167, and H195. Positions 195 and 197 each coordinate Mn(2+).

Belongs to the LpxH family. Mn(2+) is required as a cofactor.

The protein localises to the cell inner membrane. It carries out the reaction UDP-2-N,3-O-bis[(3R)-3-hydroxytetradecanoyl]-alpha-D-glucosamine + H2O = 2-N,3-O-bis[(3R)-3-hydroxytetradecanoyl]-alpha-D-glucosaminyl 1-phosphate + UMP + 2 H(+). Its pathway is glycolipid biosynthesis; lipid IV(A) biosynthesis; lipid IV(A) from (3R)-3-hydroxytetradecanoyl-[acyl-carrier-protein] and UDP-N-acetyl-alpha-D-glucosamine: step 4/6. In terms of biological role, hydrolyzes the pyrophosphate bond of UDP-2,3-diacylglucosamine to yield 2,3-diacylglucosamine 1-phosphate (lipid X) and UMP by catalyzing the attack of water at the alpha-P atom. Involved in the biosynthesis of lipid A, a phosphorylated glycolipid that anchors the lipopolysaccharide to the outer membrane of the cell. The polypeptide is UDP-2,3-diacylglucosamine hydrolase (Nitrosococcus oceani (strain ATCC 19707 / BCRC 17464 / JCM 30415 / NCIMB 11848 / C-107)).